A 216-amino-acid polypeptide reads, in one-letter code: FMN-dependent NADH:quinone oxidoreductase 2 (216 aa).

FMN is bound by residues serine 9, 15-17, 96-99, and 140-143; these read SVS, MYNF, and SRGG.

It belongs to the azoreductase type 1 family. Homodimer. Requires FMN as cofactor.

The enzyme catalyses 2 a quinone + NADH + H(+) = 2 a 1,4-benzosemiquinone + NAD(+). It catalyses the reaction N,N-dimethyl-1,4-phenylenediamine + anthranilate + 2 NAD(+) = 2-(4-dimethylaminophenyl)diazenylbenzoate + 2 NADH + 2 H(+). Functionally, quinone reductase that provides resistance to thiol-specific stress caused by electrophilic quinones. Also exhibits azoreductase activity. Catalyzes the reductive cleavage of the azo bond in aromatic azo compounds to the corresponding amines. The protein is FMN-dependent NADH:quinone oxidoreductase 2 of Xanthomonas euvesicatoria pv. vesicatoria (strain 85-10) (Xanthomonas campestris pv. vesicatoria).